The chain runs to 269 residues: Tryptophan synthase alpha chain (269 aa).

Active-site proton acceptor residues include Glu49 and Asp60.

The protein belongs to the TrpA family. As to quaternary structure, tetramer of two alpha and two beta chains.

It catalyses the reaction (1S,2R)-1-C-(indol-3-yl)glycerol 3-phosphate + L-serine = D-glyceraldehyde 3-phosphate + L-tryptophan + H2O. It functions in the pathway amino-acid biosynthesis; L-tryptophan biosynthesis; L-tryptophan from chorismate: step 5/5. In terms of biological role, the alpha subunit is responsible for the aldol cleavage of indoleglycerol phosphate to indole and glyceraldehyde 3-phosphate. This is Tryptophan synthase alpha chain from Ectopseudomonas mendocina (strain ymp) (Pseudomonas mendocina).